A 414-amino-acid polypeptide reads, in one-letter code: Argininosuccinate synthase (414 aa).

Residues A9 to S17 and A35 each bind ATP. Residues Y86 and S91 each coordinate L-citrulline. S114–N122 serves as a coordination point for ATP. L-aspartate-binding residues include T118, N122, and D123. N122 contacts L-citrulline. Residues R126, S179, S188, E269, and Y281 each coordinate L-citrulline.

It belongs to the argininosuccinate synthase family. As to quaternary structure, homotetramer.

The protein resides in the cytoplasm. Its subcellular location is the cytosol. It catalyses the reaction L-citrulline + L-aspartate + ATP = 2-(N(omega)-L-arginino)succinate + AMP + diphosphate + H(+). It functions in the pathway amino-acid biosynthesis; L-arginine biosynthesis; L-arginine from L-ornithine and carbamoyl phosphate: step 2/3. Its pathway is nitrogen metabolism; urea cycle; (N(omega)-L-arginino)succinate from L-aspartate and L-citrulline: step 1/1. Functionally, one of the enzymes of the urea cycle, the metabolic pathway transforming neurotoxic amonia produced by protein catabolism into inocuous urea in the liver of ureotelic animals. Catalyzes the formation of arginosuccinate from aspartate, citrulline and ATP and together with ASL it is responsible for the biosynthesis of arginine in most body tissues. The sequence is that of Argininosuccinate synthase from Danio rerio (Zebrafish).